Consider the following 192-residue polypeptide: FAD-linked sulfhydryl oxidase erv2 (192 aa).

Residues 1–8 lie on the Cytoplasmic side of the membrane; sequence MILNRRIQ. A helical; Signal-anchor transmembrane segment spans residues 9–29; the sequence is VILPTLLILSFIIWIFHSVMV. The Lumenal portion of the chain corresponds to 30 to 192; sequence DKDWRLFMPE…VINEDHDYSG (163 aa). Residues 61-162 enclose the ERV/ALR sulfhydryl oxidase domain; sequence HDNNTNNLMV…TSCDGFNERY (102 aa). Trp-74, Cys-138, His-141, Asn-145, and Tyr-162 together coordinate FAD. Cys-138 and Cys-155 are disulfide-bonded.

It depends on FAD as a cofactor.

It localises to the endoplasmic reticulum membrane. Its subcellular location is the cytoplasm. The protein localises to the nucleus. The catalysed reaction is 2 R'C(R)SH + O2 = R'C(R)S-S(R)CR' + H2O2. Functionally, FAD-dependent sulfhydryl oxidase that catalyzes disulfide bond formation in the endoplasmic reticulum lumen. The polypeptide is FAD-linked sulfhydryl oxidase erv2 (erv2) (Schizosaccharomyces pombe (strain 972 / ATCC 24843) (Fission yeast)).